A 367-amino-acid chain; its full sequence is CCN family member 4 (367 aa).

A signal peptide spans 1–22 (MRWLLPWTLAAVAVLRVGNILA). Positions 45–118 (RPEFCKWPCE…RYAIGVCAQV (74 aa)) constitute an IGFBP N-terminal domain. 4 cysteine pairs are disulfide-bonded: C49/C73, C53/C75, C55/C76, and C62/C79. N-linked (GlcNAc...) asparagine glycosylation is present at N86. Disulfide bonds link C87/C101 and C93/C115. The VWFC domain maps to 121-186 (VGCVLDGVRY…GQCCEQWVCD (66 aa)). N143 carries an N-linked (GlcNAc...) asparagine glycan. One can recognise a TSP type-1 domain in the interval 215–260 (NCIAYTSPWSPCSTTCGLGISTRISNVNARCWPEQESRLCNLRPCD). Cystine bridges form between C273-C310, C290-C324, C301-C340, C304-C342, and C309-C346. Residues 273–347 (CLAVYQPEEA…NACFCNLSCR (75 aa)) enclose the CTCK domain. A glycan (N-linked (GlcNAc...) asparagine) is linked at N284. N343 is a glycosylation site (N-linked (GlcNAc...) asparagine).

Belongs to the CCN family. Highly expressed in kidney and lung. Lower levels in heart, brain, spleen, liver, skeletal muscle and testis. Expressed in low metastatic melanoma cells.

It localises to the secreted. In terms of biological role, downstream regulator in the Wnt/Frizzled-signaling pathway. Associated with cell survival. Adheres to skin and melanoma fibroblasts. In vitro binding to skin fibroblasts occurs through the proteoglycans, decorin and biglycan. Suppresses tumor growth in vivo. This Mus musculus (Mouse) protein is CCN family member 4 (Ccn4).